The sequence spans 547 residues: Large cysteine-rich periplasmic protein OmcB, serovar E (547 aa).

Positions 1–22 are cleaved as a signal peptide; the sequence is MNKLIRRAVTIFAVTSVASLFA. Positions 23 to 40 are excised as a propeptide; sequence SGVLETSMAESLSTNVIS. The tract at residues 46-83 is disordered; it reads AKDNTSHKSKKARKNHSKETLVDRKEVAPVHESKATGP. A compositionally biased stretch (basic residues) spans 52 to 61; the sequence is HKSKKARKNH. Residues 62 to 79 are compositionally biased toward basic and acidic residues; that stretch reads SKETLVDRKEVAPVHESK.

In terms of assembly, part of a disulfide cross-linked outer membrane complex (COMC) composed of the major outer membrane porin (MOMP), the small cysteine-rich protein (OmcA) and the large cysteine-rich periplasmic protein (OmcB).

Its subcellular location is the periplasm. Its function is as follows. In elementary bodies (EBs, the infectious stage, which is able to survive outside the host cell) provides the structural integrity of the outer envelope through disulfide cross-links with the small cysteine-rich protein and the major outer membrane protein. It has been described in publications as the Sarkosyl-insoluble COMC (Chlamydia outer membrane complex), and serves as the functional equivalent of peptidoglycan. The polypeptide is Large cysteine-rich periplasmic protein OmcB, serovar E (omcB) (Chlamydia trachomatis).